The primary structure comprises 354 residues: Dihydroorotate dehydrogenase (quinone) (354 aa).

FMN is bound by residues 70–74 and T94; that span reads AGFDK. K74 is a binding site for substrate. Position 119–123 (119–123) interacts with substrate; that stretch reads NAMGF. FMN contacts are provided by N148 and N181. N181 is a substrate binding site. The Nucleophile role is filled by S184. N186 contributes to the substrate binding site. Residues K217 and T245 each coordinate FMN. Position 246 to 247 (246 to 247) interacts with substrate; that stretch reads NT. FMN is bound by residues G265, G294, and 315–316; that span reads YS.

The protein belongs to the dihydroorotate dehydrogenase family. Type 2 subfamily. As to quaternary structure, monomer. It depends on FMN as a cofactor.

The protein resides in the cell membrane. The enzyme catalyses (S)-dihydroorotate + a quinone = orotate + a quinol. The protein operates within pyrimidine metabolism; UMP biosynthesis via de novo pathway; orotate from (S)-dihydroorotate (quinone route): step 1/1. Its function is as follows. Catalyzes the conversion of dihydroorotate to orotate with quinone as electron acceptor. The chain is Dihydroorotate dehydrogenase (quinone) from Sulfurovum sp. (strain NBC37-1).